The chain runs to 170 residues: Ribosome maturation factor RimP (170 aa).

This sequence belongs to the RimP family.

It localises to the cytoplasm. Its function is as follows. Required for maturation of 30S ribosomal subunits. The polypeptide is Ribosome maturation factor RimP (Chlorobaculum parvum (strain DSM 263 / NCIMB 8327) (Chlorobium vibrioforme subsp. thiosulfatophilum)).